The primary structure comprises 730 residues: Elongation factor 2 (730 aa).

The tr-type G domain occupies 19–228 (QRIRNIGIVA…TGVSFKDVYD (210 aa)). GTP-binding positions include 28–35 (AHIDHGKT), 94–98 (DTPGH), and 148–151 (NKVD). Histidine 596 bears the Diphthamide mark.

Belongs to the TRAFAC class translation factor GTPase superfamily. Classic translation factor GTPase family. EF-G/EF-2 subfamily.

Its subcellular location is the cytoplasm. Functionally, catalyzes the GTP-dependent ribosomal translocation step during translation elongation. During this step, the ribosome changes from the pre-translocational (PRE) to the post-translocational (POST) state as the newly formed A-site-bound peptidyl-tRNA and P-site-bound deacylated tRNA move to the P and E sites, respectively. Catalyzes the coordinated movement of the two tRNA molecules, the mRNA and conformational changes in the ribosome. The polypeptide is Elongation factor 2 (Methanosarcina acetivorans (strain ATCC 35395 / DSM 2834 / JCM 12185 / C2A)).